Reading from the N-terminus, the 299-residue chain is ATP phosphoribosyltransferase (299 aa).

This sequence belongs to the ATP phosphoribosyltransferase family. Long subfamily. As to quaternary structure, equilibrium between an active dimeric form, an inactive hexameric form and higher aggregates. Interconversion between the various forms is largely reversible and is influenced by the natural substrates and inhibitors of the enzyme. Requires Mg(2+) as cofactor.

The protein localises to the cytoplasm. The catalysed reaction is 1-(5-phospho-beta-D-ribosyl)-ATP + diphosphate = 5-phospho-alpha-D-ribose 1-diphosphate + ATP. The protein operates within amino-acid biosynthesis; L-histidine biosynthesis; L-histidine from 5-phospho-alpha-D-ribose 1-diphosphate: step 1/9. Feedback inhibited by histidine. Its function is as follows. Catalyzes the condensation of ATP and 5-phosphoribose 1-diphosphate to form N'-(5'-phosphoribosyl)-ATP (PR-ATP). Has a crucial role in the pathway because the rate of histidine biosynthesis seems to be controlled primarily by regulation of HisG enzymatic activity. The chain is ATP phosphoribosyltransferase from Escherichia coli O7:K1 (strain IAI39 / ExPEC).